Consider the following 398-residue polypeptide: Tryptophan synthase beta chain (398 aa).

At Lys-88 the chain carries N6-(pyridoxal phosphate)lysine.

This sequence belongs to the TrpB family. Tetramer of two alpha and two beta chains. The cofactor is pyridoxal 5'-phosphate.

It carries out the reaction (1S,2R)-1-C-(indol-3-yl)glycerol 3-phosphate + L-serine = D-glyceraldehyde 3-phosphate + L-tryptophan + H2O. Its pathway is amino-acid biosynthesis; L-tryptophan biosynthesis; L-tryptophan from chorismate: step 5/5. Functionally, the beta subunit is responsible for the synthesis of L-tryptophan from indole and L-serine. The chain is Tryptophan synthase beta chain from Actinobacillus succinogenes (strain ATCC 55618 / DSM 22257 / CCUG 43843 / 130Z).